The sequence spans 550 residues: Chaperonin GroEL (550 aa).

ATP is bound by residues 30–33 (TLGP), Lys-51, 87–91 (DGTTT), Gly-415, and Asp-496. Residues 528–550 (EGGDMPAMPPGGMGGMGGMGGMM) are disordered. The span at 538 to 550 (GGMGGMGGMGGMM) shows a compositional bias: gly residues.

This sequence belongs to the chaperonin (HSP60) family. Forms a cylinder of 14 subunits composed of two heptameric rings stacked back-to-back. Interacts with the co-chaperonin GroES.

The protein resides in the cytoplasm. It carries out the reaction ATP + H2O + a folded polypeptide = ADP + phosphate + an unfolded polypeptide.. Together with its co-chaperonin GroES, plays an essential role in assisting protein folding. The GroEL-GroES system forms a nano-cage that allows encapsulation of the non-native substrate proteins and provides a physical environment optimized to promote and accelerate protein folding. In Chlorobium phaeobacteroides (strain BS1), this protein is Chaperonin GroEL.